A 799-amino-acid polypeptide reads, in one-letter code: Ribosome-releasing factor 2, mitochondrial (799 aa).

Residues 19-306 (SKIRNIGIIA…AVVNYLPSPL (288 aa)) form the tr-type G domain. GTP-binding positions include 28–35 (AHIDAGKT), 93–97 (DTPGH), and 145–148 (NKMD).

This sequence belongs to the TRAFAC class translation factor GTPase superfamily. Classic translation factor GTPase family. EF-G/EF-2 subfamily.

Its subcellular location is the mitochondrion. Mitochondrial GTPase that mediates the disassembly of ribosomes from messenger RNA at the termination of mitochondrial protein biosynthesis. Not involved in the GTP-dependent ribosomal translocation step during translation elongation. The sequence is that of Ribosome-releasing factor 2, mitochondrial from Vanderwaltozyma polyspora (strain ATCC 22028 / DSM 70294 / BCRC 21397 / CBS 2163 / NBRC 10782 / NRRL Y-8283 / UCD 57-17) (Kluyveromyces polysporus).